We begin with the raw amino-acid sequence, 618 residues long: MADSSPQLAKLRSLMKERKVHVYVIPSEDSHSSEYIAACDARREFISGFTGSAGCAIVTLEAAALATDGRYFNQAAKQLDGNWTLLKQGLQDVPTWQEWAASQSAGGKIVAVDPSLLPGSAAKKLNDQVRKAGGADLVPLDENIVDIAWGDSRPERPCQPVSVLPDELAGKPVATKIEELRQELAKKNCPGFFVSMLDEVAWLFNLRGSDIPYNPVFFSYATITPETAILYVDESKLDDSCRAHLRENNVQVKPYDSFLPDARHLHTEVKTKRQAGGDGVVIGNFLISNKASWAMSRALGGDGSVEEMRSPVGDAKAVKNETEMNGMRACHVRDGAALIEFFAWLEDQLVDKKIMIDEVQAADKLEQLRSKQQHFVGLSFPTISSTGANAAIIHYGPEKGSCATIDAGSVYLCDSGAQYRDGTTDTTRTLHFGKPSDAEKKAYTLVLKGLIGLDTAVFPKGTTGFALDCLARQHLWKNGLDYRHGTGHGVGSYLNVHEGPIGIGTRVQYTEVPLAPGNVLSNEPGYYEDGNFGIRIENIMMVREVQTEHCFGDKSYLGFEHVTMVPYCQSLIERDMLTADEKAWLNAYNDEVLKNTRGFFEGDDLTMSWLTRETRPVE.

Residues Asp-414, Asp-425, Glu-523, and Glu-537 each contribute to the Mn(2+) site.

The protein belongs to the peptidase M24B family. Requires Mn(2+) as cofactor.

It catalyses the reaction Release of any N-terminal amino acid, including proline, that is linked to proline, even from a dipeptide or tripeptide.. In terms of biological role, catalyzes the removal of a penultimate prolyl residue from the N-termini of peptides. The chain is Probable Xaa-Pro aminopeptidase P (AMPP) from Metarhizium acridum (strain CQMa 102).